The primary structure comprises 760 residues: Prolyl endopeptidase (760 aa).

Catalysis depends on charge relay system residues S609, D693, and H730.

This sequence belongs to the peptidase S9A family.

The protein localises to the cytoplasm. It carries out the reaction Hydrolysis of Pro-|-Xaa &gt;&gt; Ala-|-Xaa in oligopeptides.. Its activity is regulated as follows. Inhibited by chymostatin, Boc-Glu(NHO-Bz)-Pyrrolidide, Z-Pro-L-prolinal dimethyacetal and the peptide H-H-L-P-P-P-V-OH. In terms of biological role, cleaves peptide bonds on the C-terminal side of prolyl residues within peptides that are up to approximately 30 amino acids long. In Dictyostelium discoideum (Social amoeba), this protein is Prolyl endopeptidase (prep).